The following is a 370-amino-acid chain: ATP synthase gamma chain, chloroplastic (370 aa).

Residues 1–55 (MKFFCVAGLLASAAAFQAQPAAFTTYSPAVGGATSNVFSESSSPAHRNRRATIVM) constitute a chloroplast transit peptide. Cysteine 145 is a catalytic residue.

Belongs to the ATPase gamma chain family. In terms of assembly, F-type ATPases have 2 components, CF(1) - the catalytic core - and CF(0) - the membrane proton channel. CF(1) has five subunits: alpha(3), beta(3), gamma(1), delta(1), epsilon(1). CF(0) has four main subunits: a, b, b' and c.

It is found in the plastid. It localises to the chloroplast thylakoid membrane. Functionally, produces ATP from ADP in the presence of a proton gradient across the membrane. The gamma chain is believed to be important in regulating ATPase activity and the flow of protons through the CF(0) complex. This Trieres chinensis (Marine centric diatom) protein is ATP synthase gamma chain, chloroplastic (ATPC).